The chain runs to 501 residues: Solute carrier family 2, facilitated glucose transporter member 5 (501 aa).

At M1 the chain carries N-acetylmethionine. Over 1-18 the chain is Cytoplasmic; that stretch reads MEQQDQSMKEGRLTLVLA. A helical membrane pass occupies residues 19–39; the sequence is LATLIAAFGSSFQYGYNVAAV. A D-fructose-binding site is contributed by Y32. Topologically, residues 40-68 are extracellular; sequence NSPALLMQQFYNETYYGRTGEFMEDFPLT. N-linked (GlcNAc...) asparagine glycosylation occurs at N51. The helical transmembrane segment at 69 to 91 threads the bilayer; that stretch reads LLWSVTVSMFPFGGFIGSLLVGP. Over 92-98 the chain is Cytoplasmic; the sequence is LVNKFGR. The chain crosses the membrane as a helical span at residues 99-119; sequence KGALLFNNIFSIVPAILMGCS. Residues 120-126 are Extracellular-facing; the sequence is RVATSFE. A helical transmembrane segment spans residues 127-149; the sequence is LIIISRLLVGICAGVSSNVVPMY. Topologically, residues 150–161 are cytoplasmic; that stretch reads LGELAPKNLRGA. The chain crosses the membrane as a helical span at residues 162–182; sequence LGVVPQLFITVGILVAQIFGL. Residue Q167 participates in D-fructose binding. Residues 183–192 lie on the Extracellular side of the membrane; it reads RNLLANVDGW. The helical transmembrane segment at 193–213 threads the bilayer; it reads PILLGLTGVPAALQLLLLPFF. Over 214 to 277 the chain is Cytoplasmic; it reads PESPRYLLIQ…LFRMRSLRWQ (64 aa). The helical transmembrane segment at 278-298 threads the bilayer; sequence LLSIIVLMGGQQLSGVNAIYY. Residues Q288 and 296–298 contribute to the D-fructose site; that span reads IYY. Residues 299–313 lie on the Extracellular side of the membrane; the sequence is YADQIYLSAGVPEEH. A helical membrane pass occupies residues 314–334; that stretch reads VQYVTAGTGAVNVVMTFCAVF. The Cytoplasmic portion of the chain corresponds to 335-342; it reads VVELLGRR. A helical transmembrane segment spans residues 343–363; that stretch reads LLLLLGFSICLIACCVLTAAL. The Extracellular portion of the chain corresponds to 364 to 371; it reads ALQDTVSW. A helical transmembrane segment spans residues 372 to 394; that stretch reads MPYISIVCVISYVIGHALGPSPI. H387 provides a ligand contact to D-fructose. The Cytoplasmic portion of the chain corresponds to 395-412; the sequence is PALLITEIFLQSSRPSAF. A helical membrane pass occupies residues 413 to 433; sequence MVGGSVHWLSNFTVGLIFPFI. 419 to 420 provides a ligand contact to D-fructose; it reads HW. Residues 434–439 are Extracellular-facing; sequence QEGLGP. Residues 440–460 form a helical membrane-spanning segment; the sequence is YSFIVFAVICLLTTIYIFLIV. The Cytoplasmic portion of the chain corresponds to 461-501; it reads PETKAKTFIEINQIFTKMNKVSEVYPEKEELKELPPVTSEQ.

In terms of tissue distribution, detected in skeletal muscle, and in jejunum brush border membrane and basolateral membrane (at protein level). Expressed in small intestine, and at much lower levels in kidney, skeletal muscle, and adipose tissue.

The protein localises to the apical cell membrane. It is found in the cell membrane. Its subcellular location is the sarcolemma. The catalysed reaction is D-fructose(out) = D-fructose(in). With respect to regulation, the uptake of 2-deoxyglucose is inhibited by cytochalasin B. Fructose transport is inhibited by the flavonoids epigallocatechin gallate and apigenin but not quercetin. Its function is as follows. Functions as a fructose transporter that has only low activity with other monosaccharides. Can mediate the uptake of 2-deoxyglucose, but with low efficiency. Essential for fructose uptake in the small intestine. Plays a role in the regulation of salt uptake and blood pressure in response to dietary fructose. Required for the development of high blood pressure in response to high dietary fructose intake. The protein is Solute carrier family 2, facilitated glucose transporter member 5 of Homo sapiens (Human).